Consider the following 105-residue polypeptide: Large ribosomal subunit protein uL24 (105 aa).

It belongs to the universal ribosomal protein uL24 family. In terms of assembly, part of the 50S ribosomal subunit.

One of two assembly initiator proteins, it binds directly to the 5'-end of the 23S rRNA, where it nucleates assembly of the 50S subunit. Functionally, one of the proteins that surrounds the polypeptide exit tunnel on the outside of the subunit. This Hahella chejuensis (strain KCTC 2396) protein is Large ribosomal subunit protein uL24.